The following is a 433-amino-acid chain: Bifunctional urease accessory protein UreEF (433 aa).

Residues 1 to 200 (MKIANTFIKR…VMATAASTAS (200 aa)) form a urease accessory protein UreE region. Positions 200–433 (SMTPSLDAGQ…ETQFSRLFRS (234 aa)) are urease accessory protein UreF.

This sequence in the N-terminal section; belongs to the UreE family. In the C-terminal section; belongs to the UreF family. In terms of assembly, ureD, UreF and UreG form a complex that acts as a GTP-hydrolysis-dependent molecular chaperone, activating the urease apoprotein by helping to assemble the nickel containing metallocenter of UreC. The UreE protein probably delivers the nickel.

The protein localises to the cytoplasm. Functionally, involved in urease metallocenter assembly. Binds nickel. Probably functions as a nickel donor during metallocenter assembly. Required for maturation of urease via the functional incorporation of the urease nickel metallocenter. This Bordetella bronchiseptica (Alcaligenes bronchisepticus) protein is Bifunctional urease accessory protein UreEF (ureEF).